A 327-amino-acid chain; its full sequence is Aspartate carbamoyltransferase catalytic subunit (327 aa).

Positions 73 and 74 each coordinate carbamoyl phosphate. Lys-101 is a binding site for L-aspartate. Positions 123, 153, and 156 each coordinate carbamoyl phosphate. L-aspartate is bound by residues Arg-186 and Arg-241. Positions 282 and 283 each coordinate carbamoyl phosphate.

Belongs to the aspartate/ornithine carbamoyltransferase superfamily. ATCase family. In terms of assembly, heterododecamer (2C3:3R2) of six catalytic PyrB chains organized as two trimers (C3), and six regulatory PyrI chains organized as three dimers (R2).

The enzyme catalyses carbamoyl phosphate + L-aspartate = N-carbamoyl-L-aspartate + phosphate + H(+). It functions in the pathway pyrimidine metabolism; UMP biosynthesis via de novo pathway; (S)-dihydroorotate from bicarbonate: step 2/3. In terms of biological role, catalyzes the condensation of carbamoyl phosphate and aspartate to form carbamoyl aspartate and inorganic phosphate, the committed step in the de novo pyrimidine nucleotide biosynthesis pathway. The polypeptide is Aspartate carbamoyltransferase catalytic subunit (Acidithiobacillus ferrooxidans (strain ATCC 23270 / DSM 14882 / CIP 104768 / NCIMB 8455) (Ferrobacillus ferrooxidans (strain ATCC 23270))).